Here is a 487-residue protein sequence, read N- to C-terminus: N-succinylglutamate 5-semialdehyde dehydrogenase (487 aa).

221–226 serves as a coordination point for NAD(+); it reads GSSRTG. Catalysis depends on residues Glu244 and Cys278.

Belongs to the aldehyde dehydrogenase family. AstD subfamily.

It catalyses the reaction N-succinyl-L-glutamate 5-semialdehyde + NAD(+) + H2O = N-succinyl-L-glutamate + NADH + 2 H(+). It functions in the pathway amino-acid degradation; L-arginine degradation via AST pathway; L-glutamate and succinate from L-arginine: step 4/5. In terms of biological role, catalyzes the NAD-dependent reduction of succinylglutamate semialdehyde into succinylglutamate. In Pseudomonas aeruginosa (strain ATCC 15692 / DSM 22644 / CIP 104116 / JCM 14847 / LMG 12228 / 1C / PRS 101 / PAO1), this protein is N-succinylglutamate 5-semialdehyde dehydrogenase (astD).